The following is a 268-amino-acid chain: Large ribosomal subunit protein bL9m (268 aa).

The N-terminal 52 residues, M1–G52, are a transit peptide targeting the mitochondrion.

Belongs to the bacterial ribosomal protein bL9 family. Component of the mitochondrial ribosome large subunit (39S) which comprises a 16S rRNA and about 50 distinct proteins.

Its subcellular location is the mitochondrion. This is Large ribosomal subunit protein bL9m (MRPL9) from Bos taurus (Bovine).